The sequence spans 188 residues: Ion-translocating oxidoreductase complex subunit G (188 aa).

Topologically, residues 1–9 are cytoplasmic; sequence MSDSKEITK. A helical transmembrane segment spans residues 10–30; that stretch reads VIVTMVVISAVAAALLALTYT. Topologically, residues 31-188 are extracellular; it reads PTQAQLKLLQ…AVDYVSAQEG (158 aa). The residue at position 166 (T166) is an FMN phosphoryl threonine.

The protein belongs to the RnfG family. The Rnf complex is probably composed of eight subunits, including RnfA, RnfB, RnfC, RnfD, RnfE and RnfG. FMN serves as cofactor.

Its subcellular location is the cell membrane. Functionally, part of a membrane-bound complex that couples electron transfer with translocation of ions across the membrane. Catalyzes Na(+) transport, most probably coupled to electron transfer from reduced ferredoxin to methanophenazine and heterodisulfide reductase. Involved in heterodisulfide reduction during methanogenesis from acetate. In Methanosarcina acetivorans (strain ATCC 35395 / DSM 2834 / JCM 12185 / C2A), this protein is Ion-translocating oxidoreductase complex subunit G.